The chain runs to 318 residues: Annexin D6 (318 aa).

A2 carries the N-acetylalanine modification. Annexin repeat units lie at residues 11–82, 83–154, 168–239, and 243–314; these read PLPE…LWTL, DPTE…PLVS, KLAR…TAIK, and YPEK…ALLG. Positions 24, 26, 28, and 68 each coordinate Ca(2+). The residue at position 95 (S95) is a Phosphoserine. Phosphothreonine is present on residues T100 and T112. The residue at position 129 (Y129) is a Phosphotyrosine. Positions 256, 258, and 260 each coordinate Ca(2+). Y285 is modified (phosphotyrosine). A Phosphoserine modification is found at S290. Ca(2+) contacts are provided by D300 and T301.

Belongs to the annexin (TC 1.A.31.1) family. As to expression, expressed in flowers.

The chain is Annexin D6 (ANN6) from Arabidopsis thaliana (Mouse-ear cress).